The following is a 385-amino-acid chain: Meiosis-specific protein MEI4 (385 aa).

The interaction with REC114 stretch occupies residues 1–126 (MDVQKWYLRT…LSQHFVESCT (126 aa)). Residues 86-110 (AQEPKSSESTLTSMEDSGCDLSNEQ) form a disordered region. Residues 92 to 107 (SESTLTSMEDSGCDLS) are compositionally biased toward polar residues.

The protein belongs to the MEI4L family. Part of the MCD recombinosome complex, at least composed of IHO1, REC114 and MEI4. Forms a complex with REC114; the interaction is required for MEI4 stability. Interacts (via N-terminal domain) with REC114 (via C-terminal domain). Interacts with IHO1.

Its subcellular location is the chromosome. Functionally, required for DNA double-strand breaks (DSBs) formation in unsynapsed regions during meiotic recombination. Probably acts by forming a complex with IHO1 and REC114, which activates DSBs formation in unsynapsed regions, an essential step to ensure completion of synapsis. The polypeptide is Meiosis-specific protein MEI4 (Homo sapiens (Human)).